Consider the following 369-residue polypeptide: MHGESPIKRRESRKIWVGSVPVGGDAPIAVQSMTNSDTNDVAATVAQINRLEAAGVDIVRVSVPDMDAAEAFGRIKQQVKVPLVADIHFDYKIALRVAELGVDCLRINPGNIGREDRVRAVVDAARDRGIPIRIGVNAGSLEKDLQKKYGEPTPAALVESALRHVEHLERLNFKDFKVSVKASDVFMAVEAYRLLAKEIIQPLHLGITEAGGLRSGTVKSAVGLGMLLAEGIGDTIRISLAADPVEEVKVGYDILKSLHLRSRGINFIACPSCSRQNFDVVKTMNELEGRLEDLLVPLDVAVIGCVVNGPGEAKEAHIGLTGGTPNLIYIDGKPAQKLTNDNLVDELEKLIRQKAAEKVEADAALIARG.

[4Fe-4S] cluster-binding residues include Cys270, Cys273, Cys305, and Glu312.

This sequence belongs to the IspG family. [4Fe-4S] cluster serves as cofactor.

It catalyses the reaction (2E)-4-hydroxy-3-methylbut-2-enyl diphosphate + oxidized [flavodoxin] + H2O + 2 H(+) = 2-C-methyl-D-erythritol 2,4-cyclic diphosphate + reduced [flavodoxin]. It functions in the pathway isoprenoid biosynthesis; isopentenyl diphosphate biosynthesis via DXP pathway; isopentenyl diphosphate from 1-deoxy-D-xylulose 5-phosphate: step 5/6. In terms of biological role, converts 2C-methyl-D-erythritol 2,4-cyclodiphosphate (ME-2,4cPP) into 1-hydroxy-2-methyl-2-(E)-butenyl 4-diphosphate. The polypeptide is 4-hydroxy-3-methylbut-2-en-1-yl diphosphate synthase (flavodoxin) (Pseudomonas fluorescens (strain ATCC BAA-477 / NRRL B-23932 / Pf-5)).